Here is a 491-residue protein sequence, read N- to C-terminus: Glutamate--tRNA ligase (491 aa).

The 'HIGH' region motif lies at 13-23 (PSPTGFLHIGN). Zn(2+) is bound by residues Cys110, Cys112, Cys137, and His139. The 'KMSKS' region motif lies at 254–258 (KLSKR). Lys257 serves as a coordination point for ATP.

Belongs to the class-I aminoacyl-tRNA synthetase family. Glutamate--tRNA ligase type 1 subfamily. Monomer. Zn(2+) is required as a cofactor.

It is found in the cytoplasm. It catalyses the reaction tRNA(Glu) + L-glutamate + ATP = L-glutamyl-tRNA(Glu) + AMP + diphosphate. Catalyzes the attachment of glutamate to tRNA(Glu) in a two-step reaction: glutamate is first activated by ATP to form Glu-AMP and then transferred to the acceptor end of tRNA(Glu). The polypeptide is Glutamate--tRNA ligase (Listeria welshimeri serovar 6b (strain ATCC 35897 / DSM 20650 / CCUG 15529 / CIP 8149 / NCTC 11857 / SLCC 5334 / V8)).